The following is a 776-amino-acid chain: MKFYIEDLLVYFPYSYIYPEQYSYMVALKRSLDNGGPCILEMPSGTGKTVSLLSLISSYQVKNPSIKLIYCSRTVPEIEQATEEARRVLQYRNSEMGEESPKTLCMSMSSRRNLCIQPRVSEERDGKVVDALCRELTSSWNRESPTSEKCKFFENFESNGKEILLEGVYSLEDLKEYGLKHQMCPYFLSRHMLNFANIVIFSYQYLLDPKIASLISSSFPSNSIVVFDEAHNIDNVCINALSINIDNKLLDTSSKNIAKINKQIEDIKKVDEKRLKDEYQRLVNGLARSGSTRADETTSDPVLPNDVIQEAVPGNIRKAEHFISLLRRVVDYLKSRLKSQMLLSESPLAFLQGLYHATQISSRTLRFCSSRLSSLLRTLRINDVNQFSGISLIADFATLVGTYNNGFLIIIEPYYQRQNNTYDQIFQFCCLDASIGMKPIFDKYRSVVITSGTLSPLDIYTKMLNFRPTVVERLTMSLNRNCICPCILTRGSDQISISTKFDVRSDTAVVRNYGALLVEVSAIVPDGIICFFTSYSYMEQIVSVWNEMGLLNNILTNKLIFVETSDPAESALALQNYKKACDSGRGAVLLSVARGKVSEGIDFDNQYGRCVILYGIPYINTESKVLRARLEFLRDRYQIRENEFLTFDAMRTASQCVGRVIRGKSDYGIMIFADKRYNRLDKRNKLPQWILQFCQPQHLNLSTDMAISLSKTFLREMGQPFSREEQLGKSLWSLEHVEKQSTSKPPQQQNSAINSTITTSTTTTTTTSTISETHLT.

The 271-residue stretch at 7–277 (DLLVYFPYSY…KKVDEKRLKD (271 aa)) folds into the Helicase ATP-binding domain. ATP is bound at residue 42 to 49 (MPSGTGKT). Cys-115, Cys-133, Cys-150, and Cys-184 together coordinate [4Fe-4S] cluster. Residues 228 to 231 (DEAH) carry the DEAH box motif. Residues 736 to 776 (HVEKQSTSKPPQQQNSAINSTITTSTTTTTTTSTISETHLT) are disordered. Polar residues predominate over residues 742–754 (TSKPPQQQNSAIN). Low complexity predominate over residues 755-776 (STITTSTTTTTTTSTISETHLT).

Belongs to the helicase family. RAD3/XPD subfamily. As to quaternary structure, component of the 7-subunit TFIIH core complex composed of XPB/repB, XPD/repD, gtf2h1, gtf2h2, gtf2h3, gtf2h4 and gtf2h5, which is active in NER. The core complex associates with the 3-subunit CDK-activating kinase (CAK) module composed of cycH/cyclin H, cdk7 and mnat1 to form the 10-subunit holoenzyme (holo-TFIIH) active in transcription. Mg(2+) serves as cofactor. It depends on [4Fe-4S] cluster as a cofactor.

It localises to the nucleus. The enzyme catalyses Couples ATP hydrolysis with the unwinding of duplex DNA at the replication fork by translocating in the 5'-3' direction. This creates two antiparallel DNA single strands (ssDNA). The leading ssDNA polymer is the template for DNA polymerase III holoenzyme which synthesizes a continuous strand.. It catalyses the reaction ATP + H2O = ADP + phosphate + H(+). In terms of biological role, ATP-dependent 5'-3' DNA helicase, component of the general transcription and DNA repair factor IIH (TFIIH) core complex, which is involved in general and transcription-coupled nucleotide excision repair (NER) of damaged DNA and, when complexed to CDK-activating kinase (CAK), in transcription by RNA polymerase II. In NER, TFIIH acts by opening DNA around the lesion to allow the excision of the damaged oligonucleotide and its replacement by a new DNA fragment. The ATP-dependent helicase activity of XPD/repD is required for DNA opening. In transcription, TFIIH has an essential role in transcription initiation. When the pre-initiation complex (PIC) has been established, TFIIH is required for promoter opening and promoter escape. Phosphorylation of the C-terminal tail (CTD) of the largest subunit of RNA polymerase II by the kinase module CAK controls the initiation of transcription. XPD/repD acts by forming a bridge between CAK and the core-TFIIH complex. This chain is General transcription and DNA repair factor IIH helicase subunit XPD, found in Dictyostelium discoideum (Social amoeba).